A 113-amino-acid polypeptide reads, in one-letter code: Large ribosomal subunit protein bL19 (113 aa).

Belongs to the bacterial ribosomal protein bL19 family.

In terms of biological role, this protein is located at the 30S-50S ribosomal subunit interface and may play a role in the structure and function of the aminoacyl-tRNA binding site. The sequence is that of Large ribosomal subunit protein bL19 from Moorella thermoacetica (strain ATCC 39073 / JCM 9320).